The following is a 416-amino-acid chain: S-adenosylmethionine synthase (416 aa).

Residue His-14 coordinates ATP. Asp-16 is a binding site for Mg(2+). Position 42 (Glu-42) interacts with K(+). Residues Glu-55 and Gln-98 each coordinate L-methionine. Positions Gln-98–Arg-108 are flexible loop. Residues Asp-164–Lys-166, Lys-240–Phe-241, Asp-249, Arg-255–Lys-256, Ala-272, and Lys-276 each bind ATP. Residue Asp-249 coordinates L-methionine. L-methionine is bound at residue Lys-280.

The protein belongs to the AdoMet synthase family. Homotetramer; dimer of dimers. The cofactor is Mg(2+). Requires K(+) as cofactor.

Its subcellular location is the cytoplasm. The enzyme catalyses L-methionine + ATP + H2O = S-adenosyl-L-methionine + phosphate + diphosphate. It functions in the pathway amino-acid biosynthesis; S-adenosyl-L-methionine biosynthesis; S-adenosyl-L-methionine from L-methionine: step 1/1. In terms of biological role, catalyzes the formation of S-adenosylmethionine (AdoMet) from methionine and ATP. The overall synthetic reaction is composed of two sequential steps, AdoMet formation and the subsequent tripolyphosphate hydrolysis which occurs prior to release of AdoMet from the enzyme. The protein is S-adenosylmethionine synthase of Flavobacterium psychrophilum (strain ATCC 49511 / DSM 21280 / CIP 103535 / JIP02/86).